A 92-amino-acid chain; its full sequence is Large ribosomal subunit protein eL43 (92 aa).

Residues Cys39, Cys42, Cys57, and Cys60 each contribute to the Zn(2+) site. The C4-type zinc finger occupies 39–60 (CSFCGKTKMKRRAVGIWHCGSC).

Belongs to the eukaryotic ribosomal protein eL43 family. In terms of assembly, component of the large ribosomal subunit.

It localises to the cytoplasm. Component of the large ribosomal subunit. The ribosome is a large ribonucleoprotein complex responsible for the synthesis of proteins in the cell. The chain is Large ribosomal subunit protein eL43 (rpl37a) from Ictalurus punctatus (Channel catfish).